A 231-amino-acid chain; its full sequence is Ubiquinone biosynthesis protein coq-4, mitochondrial (231 aa).

Zn(2+) is bound by residues His-133, Asp-134, His-137, and Glu-149.

This sequence belongs to the COQ4 family. In terms of assembly, component of a multi-subunit COQ enzyme complex. Zn(2+) is required as a cofactor.

The protein resides in the mitochondrion inner membrane. The enzyme catalyses a 4-hydroxy-3-methoxy-5-(all-trans-polyprenyl)benzoate + H(+) = a 2-methoxy-6-(all-trans-polyprenyl)phenol + CO2. It functions in the pathway cofactor biosynthesis; ubiquinone biosynthesis. In terms of biological role, lyase that catalyzes the C1-decarboxylation of 4-hydroxy-3-methoxy-5-(all-trans-polyprenyl)benzoic acid into 2-methoxy-6-(all-trans-polyprenyl)phenol during ubiquinone biosynthesis. The protein is Ubiquinone biosynthesis protein coq-4, mitochondrial of Caenorhabditis elegans.